The chain runs to 249 residues: Mannose-binding protein C (249 aa).

The signal sequence occupies residues 1–20; sequence MSLFTSLPFLLLTAVTASCA. One can recognise a Collagen-like domain in the interval 43-101; the sequence is GINGIPGKDGRDGAKGEKGEPGQGLRGSQGPPGKMGPQGTPGIPGIPGPIGQKGDPGEN. A disordered region spans residues 43–103; sequence GINGIPGKDG…QKGDPGENMG (61 aa). Position 48 is a 4-hydroxyproline (proline 48). The segment covering 50–62 has biased composition (basic and acidic residues); sequence KDGRDGAKGEKGE. 4 positions are modified to 4-hydroxyproline: proline 63, proline 74, proline 83, and proline 86. Residues 79–95 are compositionally biased toward low complexity; that stretch reads PQGTPGIPGIPGPIGQK. Residues 113–131 adopt a coiled-coil conformation; the sequence is RATLQSELNQIKNWLIFSL. The C-type lectin domain maps to 135–246; it reads VGKKAFFTNG…CSASFLTVCE (112 aa). Cystine bridges form between cysteine 156–cysteine 245 and cysteine 223–cysteine 237.

Oligomeric complex of 3 or more homotrimers. Interacts with MASP1 and MASP2. Interacts with MEP1A and MEP1B and may inhibit their catalytic activity. In terms of processing, hydroxylation on proline residues within the sequence motif, GXPG, is most likely to be 4-hydroxy as this fits the requirement for 4-hydroxylation in vertebrates.

It localises to the secreted. Calcium-dependent lectin involved in innate immune defense. Binds mannose, fucose and N-acetylglucosamine on different microorganisms and activates the lectin complement pathway. Binds to late apoptotic cells, as well as to apoptotic blebs and to necrotic cells, but not to early apoptotic cells, facilitating their uptake by macrophages. The chain is Mannose-binding protein C (MBL) from Bos taurus (Bovine).